The primary structure comprises 171 residues: Myosin regulatory light chain 12B (171 aa).

Phosphothreonine; by MLCK and ZIPK/DAPK3 is present on Thr-18. Ser-19 is subject to Phosphoserine; by MLCK and ZIPK/DAPK3. EF-hand domains are found at residues 28 to 63 (SQIQ…LGKN), 97 to 132 (DPED…MGDR), and 133 to 168 (FTDE…GAKD). The Ca(2+) site is built by Asp-41, Asn-43, Asp-45, and Asp-52.

In terms of assembly, myosin is a hexamer of 2 heavy chains and 4 light chains: interacts with myosin heavy chain MYO19. In terms of processing, phosphorylation increases the actin-activated myosin ATPase activity and thereby regulates the contractile activity. It is required to generate the driving force in the migration of the cells but not necessary for localization of myosin-2 at the leading edge. Phosphorylation is reduced following epigallocatechin-3-O-gallate treatment.

Myosin regulatory subunit that plays an important role in regulation of both smooth muscle and nonmuscle cell contractile activity via its phosphorylation. Phosphorylation triggers actin polymerization in vascular smooth muscle. Implicated in cytokinesis, receptor capping, and cell locomotion. The polypeptide is Myosin regulatory light chain 12B (MYL12B) (Bos taurus (Bovine)).